Reading from the N-terminus, the 307-residue chain is Probable thioesterase KK1J (307 aa).

Belongs to the AMT4 thioesterase family.

The protein operates within secondary metabolite biosynthesis. Its function is as follows. Probable thioesterase; part of the gene cluster that mediates the biosynthesis of KK-1, a novel cyclic depsipeptide with 10 residues which is a promising active compound with high activity against many plant pathogens, especially Botrytis cinerea. Within the pathway, kk1J is not essential for the biosynthesis of KK-1, but plays a role for efficient production via correction of peptide chain synthesis by kk1B. The nonribosomal peptide synthetase (NRPS) kk1B catalyzes the elongation and cyclization of the decapeptide chain composed of 1 D-lactic acid residue (D-Lac), 1 pipecolic acid residue (Pip), 1 aspartic acid residue (Asp), 1 isoleucine residue (Ile), 1 glycine residue (Gly), 1 tyrosine residue (Tyr) and 4 valine residues (Val). The Asp, Ile and 3 Val residues are N-methylated by the 5 methyltransferase domains from the NRPS (found in modules 3, 5, 6, 7 and 9), whereas the Tyr residue is O-methylated by the cluster encoded O-methyltransferase kk1A. The thioesterase kk1J is likely to be involved in the corrective mechanism of peptide chain synthesis. The D-lactate dehydrogenase kk1H is involved in the synthesis of D-lactic acid from pyruvic acid, which is recognized by the A domain of the first kk1B module. The pyrroline-5-carboxylate reductase kk1I is involved in the synthesis of the L-pipecolic acid residue of KK-1 from delta-1-pyrroline-5-carboxylate (P5C), a metabolic intermediate of lysine. It still is unclear how kk1C and kk1D are involved in the production of KK-1. The polypeptide is Probable thioesterase KK1J (Curvularia clavata).